Reading from the N-terminus, the 289-residue chain is Rhodopsin (289 aa).

The Extracellular portion of the chain corresponds to 1–7 (YLVNPAA). A helical transmembrane segment spans residues 8–32 (YAAPGAYMFLLILVGFPVNFLTLYV). At 33–44 (TLEHKKLRTPLN) the chain is on the cytoplasmic side. A helical transmembrane segment spans residues 45–67 (YILLNLAVADLFMVLGGFTTTMY). Residues 68–81 (TSMHGYFVLGRLGC) lie on the Extracellular side of the membrane. A disulfide bridge connects residues Cys81 and Cys158. A helical membrane pass occupies residues 82–104 (NLEGFFATLGGEIALWSLVVLAI). Residues 105–107 (ERW) carry the 'Ionic lock' involved in activated form stabilization motif. Residues 105-123 (ERWIVVCKPISNFRFTEDH) are Cytoplasmic-facing. Residues 124–144 (AIMGLAFSWVMALTCAVPPLV) traverse the membrane as a helical segment. Topologically, residues 145-173 (GWSRYIPEGMQCSCGVDYYTRAEGFNNES) are extracellular. N-linked (GlcNAc...) asparagine glycosylation is present at Asn171. The chain crosses the membrane as a helical span at residues 174–195 (FVIYMFIVHFLIPLSNNFFCYG). Residues 196–223 (RLLCAVKEAAAAQQESETTQRAEREVSR) are Cytoplasmic-facing. Residues 224-245 (MVVMMVVSFLMCWLPYASVAWY) traverse the membrane as a helical segment. Residues 246–257 (IFCNQGSEFGPI) are Extracellular-facing. The chain crosses the membrane as a helical span at residues 258–279 (FMTLPAFFAKSSAIYNPLIYIC). Lys267 is modified (N6-(retinylidene)lysine). Residues 280 to 289 (MNKHVRHCMI) lie on the Cytoplasmic side of the membrane.

Belongs to the G-protein coupled receptor 1 family. Opsin subfamily. In terms of processing, phosphorylated on some or all of the serine and threonine residues present in the C-terminal region. Contains one covalently linked retinal chromophore.

It is found in the membrane. Its subcellular location is the cell projection. The protein localises to the cilium. It localises to the photoreceptor outer segment. In terms of biological role, photoreceptor required for image-forming vision at low light intensity. While most salt water fish species use retinal as chromophore, most freshwater fish use 3-dehydroretinal, or a mixture of retinal and 3-dehydroretinal. Light-induced isomerization of 11-cis to all-trans retinal triggers a conformational change that activates signaling via G-proteins. Subsequent receptor phosphorylation mediates displacement of the bound G-protein alpha subunit by arrestin and terminates signaling. This chain is Rhodopsin (rho), found in Cottocomephorus grewingkii (Baikal yellowfin).